The following is a 216-amino-acid chain: MTDPTSIKHQTTLTSGTSADFTQAGEPFALFAEWFAEASKSEPNDPNAMALSTVDADGLPDVRMVLMKGYDADGFVFYSHKASQKGQELAANPKAALLFHWKSLRRQVRIRGLVTPVTDAEADAYFATRPKQAQLGAWASKQSQPLESRFAFEQAIAKVATQYIIGEVPRPPGWSGWRITPVRMEFWHDRPFRLHDRIEFRREAAGQPWTKVRMYP.

FMN contacts are provided by residues 63-68 (RMVLMK), 78-79 (YS), lysine 85, and glutamine 107. Lysine 68 serves as a coordination point for substrate. Substrate contacts are provided by tyrosine 125 and arginine 129. Residues 142-143 (QS) and tryptophan 187 each bind FMN. A substrate-binding site is contributed by 193–195 (RLH). Residue arginine 197 coordinates FMN.

It belongs to the pyridoxamine 5'-phosphate oxidase family. Homodimer. FMN serves as cofactor.

It carries out the reaction pyridoxamine 5'-phosphate + O2 + H2O = pyridoxal 5'-phosphate + H2O2 + NH4(+). The enzyme catalyses pyridoxine 5'-phosphate + O2 = pyridoxal 5'-phosphate + H2O2. The protein operates within cofactor metabolism; pyridoxal 5'-phosphate salvage; pyridoxal 5'-phosphate from pyridoxamine 5'-phosphate: step 1/1. It functions in the pathway cofactor metabolism; pyridoxal 5'-phosphate salvage; pyridoxal 5'-phosphate from pyridoxine 5'-phosphate: step 1/1. Its function is as follows. Catalyzes the oxidation of either pyridoxine 5'-phosphate (PNP) or pyridoxamine 5'-phosphate (PMP) into pyridoxal 5'-phosphate (PLP). The protein is Pyridoxine/pyridoxamine 5'-phosphate oxidase of Bradyrhizobium sp. (strain ORS 278).